Consider the following 225-residue polypeptide: Doublesex- and mab-3-related transcription factor C1 (225 aa).

Residues 1–12 (MQRPSGSREVRK) show a composition bias toward basic and acidic residues. Disordered regions lie at residues 1–49 (MQRP…SHVH) and 179–216 (QTRH…LPSG). Residues 27-37 (RVKKHVVRRQK) are compositionally biased toward basic residues.

This sequence belongs to the DMRT family.

In Rattus norvegicus (Rat), this protein is Doublesex- and mab-3-related transcription factor C1 (Dmrtc1).